The following is a 266-amino-acid chain: Translation initiation factor 2 subunit alpha (266 aa).

In terms of domain architecture, S1 motif spans 12–83; it reads GEILIATVKQ…RKGTVDVSLK (72 aa).

The protein belongs to the eIF-2-alpha family. In terms of assembly, heterotrimer composed of an alpha, a beta and a gamma chain.

EIF-2 functions in the early steps of protein synthesis by forming a ternary complex with GTP and initiator tRNA. The sequence is that of Translation initiation factor 2 subunit alpha from Saccharolobus islandicus (strain Y.N.15.51 / Yellowstone #2) (Sulfolobus islandicus).